Here is a 363-residue protein sequence, read N- to C-terminus: 3-ketodihydrosphingosine reductase TSC10 (363 aa).

Leucine 10 provides a ligand contact to NADP(+). The NADPH site is built by glycine 13, serine 15, and glycine 17. The GXSXG motif lies at 13–17 (GGSQG). An NADP(+)-binding site is contributed by leucine 18. Arginine 40, lysine 44, aspartate 131, and leucine 132 together coordinate NADPH. Aspartate 131 lines the NADP(+) pocket. The active-site Proton donor is serine 206. The NADP(+) site is built by tyrosine 220, lysine 224, and serine 253. The active-site Proton acceptor is tyrosine 220. Lysine 224 serves as the catalytic Lowers pKa of active site Tyr. A helical membrane pass occupies residues 324–344 (FVQWLIGVIANLLVVPFYMVL).

Belongs to the short-chain dehydrogenases/reductases (SDR) family.

Its subcellular location is the endoplasmic reticulum membrane. It carries out the reaction sphinganine + NADP(+) = 3-oxosphinganine + NADPH + H(+). Its pathway is lipid metabolism; sphingolipid metabolism. Catalyzes the reduction of 3'-oxosphinganine (3-ketodihydrosphingosine/KDS) to sphinganine (dihydrosphingosine/DHS), the second step of de novo sphingolipid biosynthesis. The sequence is that of 3-ketodihydrosphingosine reductase TSC10 (TSC10) from Candida glabrata (strain ATCC 2001 / BCRC 20586 / JCM 3761 / NBRC 0622 / NRRL Y-65 / CBS 138) (Yeast).